The sequence spans 218 residues: Thymidylate kinase (218 aa).

Residue 15 to 22 (GLDRSGKS) participates in ATP binding.

Belongs to the thymidylate kinase family.

It carries out the reaction dTMP + ATP = dTDP + ADP. It participates in pyrimidine metabolism; dTTP biosynthesis. Its function is as follows. Catalyzes the conversion of dTMP to dTDP. This is Thymidylate kinase from Caenorhabditis elegans.